The primary structure comprises 173 residues: Large ribosomal subunit protein uL10 (173 aa).

The protein belongs to the universal ribosomal protein uL10 family. As to quaternary structure, part of the ribosomal stalk of the 50S ribosomal subunit. The N-terminus interacts with L11 and the large rRNA to form the base of the stalk. The C-terminus forms an elongated spine to which L12 dimers bind in a sequential fashion forming a multimeric L10(L12)X complex.

Its function is as follows. Forms part of the ribosomal stalk, playing a central role in the interaction of the ribosome with GTP-bound translation factors. The protein is Large ribosomal subunit protein uL10 (rplJ) of Synechocystis sp. (strain ATCC 27184 / PCC 6803 / Kazusa).